Reading from the N-terminus, the 140-residue chain is Large ribosomal subunit protein uL13 (140 aa).

It belongs to the universal ribosomal protein uL13 family. Part of the 50S ribosomal subunit.

In terms of biological role, this protein is one of the early assembly proteins of the 50S ribosomal subunit, although it is not seen to bind rRNA by itself. It is important during the early stages of 50S assembly. This is Large ribosomal subunit protein uL13 from Methanosarcina mazei (strain ATCC BAA-159 / DSM 3647 / Goe1 / Go1 / JCM 11833 / OCM 88) (Methanosarcina frisia).